An 889-amino-acid chain; its full sequence is Protein SEY1 homolog (889 aa).

Residues 1 to 801 (MDTKTQIIDY…ETGAKMSLKN (801 aa)) are Cytoplasmic-facing. A GB1/RHD3-type G domain is found at 31–277 (GFNYNVIAIL…IPSDGFAHYC (247 aa)). A GTP-binding site is contributed by 41–48 (GSQSSGKS). Positions 429-449 (RKDGKGGSSPSAGDKKDTKDT) are disordered. A coiled-coil region spans residues 679–699 (LDEIMDVLKSKLDEISDNLSS). The chain crosses the membrane as a helical span at residues 802–822 (VPLFFWVILLILGWNELLFFT). The Lumenal portion of the chain corresponds to 823 to 825 (RFF). The helical transmembrane segment at 826-846 (FRLNIILPLFLAAAVILSTLV) threads the bilayer. The Cytoplasmic segment spans residues 847–889 (FNGNMEVLSIINKAVFFLAKNSFGVYRQLQAMGGKAAQGAAAD).

This sequence belongs to the TRAFAC class dynamin-like GTPase superfamily. GB1/RHD3 GTPase family. RHD3 subfamily.

It is found in the endoplasmic reticulum membrane. Probable GTP-binding protein involved in generating and maintaining the structure of the tubular endoplasmic reticulum network. The polypeptide is Protein SEY1 homolog (Plasmodium vivax (strain Salvador I)).